The chain runs to 464 residues: UDP-glucose:undecaprenyl-phosphate glucose-1-phosphate transferase (464 aa).

The Cytoplasmic segment spans residues 1 to 15 (MTNLKKRERAKTNAS). A helical transmembrane segment spans residues 16–36 (LISMVQRFSDITIMFAGLWLV). Residues 37 to 38 (CE) lie on the Periplasmic side of the membrane. Residues 39 to 59 (VSGLSFLYMHLLVALITLVVF) form a helical membrane-spanning segment. Residues 60 to 80 (QMLGGITDFYRSWRGVRAATE) are Cytoplasmic-facing. The chain crosses the membrane as a helical span at residues 81-101 (FALLLQNWTLSVIFSAGLVAF). The Periplasmic portion of the chain corresponds to 102–104 (NND). The helical transmembrane segment at 105–125 (FDTQLKIWLAWYALTSIGLVV) threads the bilayer. At 126–278 (CRSCIRIGAG…VNRLLKRAED (153 aa)) the chain is on the cytoplasmic side. A helical membrane pass occupies residues 279-299 (IVLATLILLLISPVLCCIALA). At 300–464 (VKLSSPGPVI…FKGFVNKAAY (165 aa)) the chain is on the periplasmic side.

This sequence belongs to the bacterial sugar transferase family.

It is found in the cell inner membrane. It catalyses the reaction di-trans,octa-cis-undecaprenyl phosphate + UDP-alpha-D-glucose = alpha-D-glucosyl di-trans,octa-cis-undecaprenyl diphosphate + UMP. It functions in the pathway exopolysaccharide biosynthesis; colanic acid biosynthesis. Functionally, is the initiating enzyme for colanic acid (CA) synthesis. Catalyzes the transfer of the glucose-1-phosphate moiety from UDP-Glc onto the carrier lipid undecaprenyl phosphate (C55-P), forming a phosphoanhydride bond yielding to glucosyl-pyrophosphoryl-undecaprenol (Glc-PP-C55). Also possesses a weak galactose-1-P transferase activity. This chain is UDP-glucose:undecaprenyl-phosphate glucose-1-phosphate transferase (wcaJ), found in Escherichia coli (strain K12).